Consider the following 746-residue polypeptide: WD repeat-containing protein 91 (746 aa).

Residues 183–215 are a coiled coil; it reads QRTNQVQEENEVLRQKLFALQAEIHRLKKEEQQ. Serine 256 is modified (phosphoserine). The span at 265-278 shows a compositional bias: low complexity; sequence LLPQSKKSPSRLSP. The tract at residues 265–336 is disordered; that stretch reads LLPQSKKSPS…QHRQRRLQDH (72 aa). The span at 282-299 shows a compositional bias: polar residues; sequence PPQTQSSAKKESFGSQTT. Phosphoserine is present on residues serine 288 and serine 293. 7 WD repeats span residues 405-444, 447-487, 514-554, 559-598, 601-640, 663-701, and 708-746; these read EHHS…QTKA, ISKS…NLCE, AASS…QQLQ, PEPI…CAMS, AHCG…LKVS, VQVP…KVLE, and GHRA…AHKV.

It belongs to the WD repeat WDR91 family. In terms of assembly, interacts with WDR81; involved in early to late endosome cargo transport. Interacts with BECN1; negatively regulates the PI3 kinase/PI3K activity associated with endosomal membranes.

The protein resides in the early endosome membrane. It is found in the late endosome membrane. Functions as a negative regulator of the PI3 kinase/PI3K activity associated with endosomal membranes via BECN1, a core subunit of the PI3K complex. By modifying the phosphatidylinositol 3-phosphate/PtdInsP3 content of endosomal membranes may regulate endosome fusion, recycling, sorting and early to late endosome transport. It is for instance, required for the delivery of cargos like BST2/tetherin from early to late endosome and thereby participates indirectly to their degradation by the lysosome. May play a role in meiosis. The protein is WD repeat-containing protein 91 of Bos taurus (Bovine).